A 354-amino-acid chain; its full sequence is Arginase-2, mitochondrial (354 aa).

The N-terminal 22 residues, 1–22 (MFLRSSVSRLLHGQIPCALTRS), are a transit peptide targeting the mitochondrion. Mn(2+)-binding residues include histidine 120, aspartate 143, histidine 145, and aspartate 147. Substrate-binding positions include 145-149 (HADIN), 156-158 (SGN), and glutamate 202. 2 residues coordinate Mn(2+): aspartate 251 and aspartate 253. Substrate contacts are provided by threonine 265 and glutamate 296.

It belongs to the arginase family. Homotrimer. The cofactor is Mn(2+).

The protein localises to the mitochondrion. It carries out the reaction L-arginine + H2O = urea + L-ornithine. Its pathway is nitrogen metabolism; urea cycle; L-ornithine and urea from L-arginine: step 1/1. In terms of biological role, may play a role in the regulation of extra-urea cycle arginine metabolism and also in down-regulation of nitric oxide synthesis. Extrahepatic arginase functions to regulate L-arginine bioavailability to nitric oxid synthase (NOS). Arginine metabolism is a critical regulator of innate and adaptive immune responses. Seems to be involved in negative regulation of the survival capacity of activated T cells. May suppress inflammation-related signaling in asthmatic airway epithelium. May play a role in promoting prenatal immune suppression. Regulates RPS6KB1 signaling, which promotes endothelial cell senescence and inflammation and implicates NOS3/eNOS dysfunction. Can inhibit endothelial autophagy independently of its enzymatic activity implicating mTORC2 signaling. Involved in vascular smooth muscle cell senescence and apoptosis independently of its enzymatic activity. The sequence is that of Arginase-2, mitochondrial (Arg2) from Rattus norvegicus (Rat).